Consider the following 262-residue polypeptide: 3-methyl-2-oxobutanoate hydroxymethyltransferase (262 aa).

Mg(2+) is bound by residues Asp43 and Asp82. 3-methyl-2-oxobutanoate contacts are provided by residues 43–44 (DS), Asp82, and Lys111. Residue Glu113 coordinates Mg(2+). The active-site Proton acceptor is the Glu180.

It belongs to the PanB family. Homodecamer; pentamer of dimers. It depends on Mg(2+) as a cofactor.

It localises to the cytoplasm. It catalyses the reaction 3-methyl-2-oxobutanoate + (6R)-5,10-methylene-5,6,7,8-tetrahydrofolate + H2O = 2-dehydropantoate + (6S)-5,6,7,8-tetrahydrofolate. The protein operates within cofactor biosynthesis; coenzyme A biosynthesis. Catalyzes the reversible reaction in which hydroxymethyl group from 5,10-methylenetetrahydrofolate is transferred onto alpha-ketoisovalerate to form ketopantoate. This is 3-methyl-2-oxobutanoate hydroxymethyltransferase from Pyrobaculum aerophilum (strain ATCC 51768 / DSM 7523 / JCM 9630 / CIP 104966 / NBRC 100827 / IM2).